The primary structure comprises 195 residues: MYLINQNGWIEVICGSMFSGKSEELIRRVRRTQFAKQHAIVFKPCIDNRYSEEDVVSHNGLKVKAVPVSASKDIFEHITEELDVIAIDEVQFFDGDIVEVVQVLANRGYRVIVAGLDQDFRGLPFGQVPQLMAIAEHVTKLQAVCSVCGSPASRTQRLIDGEPAAFDDPIILVGASESYEPRCRHCHAVPANKDK.

Residues 15 to 22 (GSMFSGKS) and 88 to 91 (DEVQ) each bind ATP. The Proton acceptor role is filled by Glu89. Position 120 (Phe120) interacts with substrate. Zn(2+) is bound by residues Cys145 and Cys148. Substrate is bound by residues 170–174 (IILVG) and Tyr179. Zn(2+) is bound by residues Cys183 and Cys186.

It belongs to the thymidine kinase family. Homotetramer.

It is found in the cytoplasm. It catalyses the reaction thymidine + ATP = dTMP + ADP + H(+). The chain is Thymidine kinase from Bacillus cereus (strain ATCC 14579 / DSM 31 / CCUG 7414 / JCM 2152 / NBRC 15305 / NCIMB 9373 / NCTC 2599 / NRRL B-3711).